A 979-amino-acid polypeptide reads, in one-letter code: Putative cellulose synthase-like protein D6 (979 aa).

The interval 1 to 24 (MMDGESPLRHPRISHVSNSGSDFG) is disordered. The segment covering 14–24 (SHVSNSGSDFG) has biased composition (low complexity). The next 2 membrane-spanning stretches (helical) occupy residues 116–136 (IIIALYRILIVVRVVSLALFL) and 147–167 (ALWLWLLSVICELWFAFSWLL). Residues Asp-247 and Asp-683 contribute to the active site. The next 6 membrane-spanning stretches (helical) occupy residues 765-785 (IFILTYCFLPPLSLFSGHFVV), 788-808 (LTGSFLIYLLIITLSLCGLAV), 837-857 (LVAVLQGILKVIAGVEISFTL), 882-902 (ALMIPPLTIIILNIVAILFAV), 913-933 (WSNLLGGTFFASWVLLHMYPF), and 946-966 (TVVYVWSGLIAICLSLLYITI).

This sequence belongs to the glycosyltransferase 2 family. Plant cellulose synthase-like D subfamily.

It is found in the golgi apparatus membrane. Its function is as follows. Thought to be a Golgi-localized beta-glycan synthase that polymerize the backbones of noncellulosic polysaccharides (hemicelluloses) of plant cell wall. The polypeptide is Putative cellulose synthase-like protein D6 (CSLD6) (Arabidopsis thaliana (Mouse-ear cress)).